A 465-amino-acid chain; its full sequence is Ras-like GTPase YcjX (465 aa).

The Walker A motif motif lies at 26–33; that stretch reads GLSRSGKT. Residues S28, G31, K32, T33, A34, W95, T99, and R100 each coordinate GTP. 6 residues coordinate GDP: G31, K32, T33, A34, W95, and T99. The residue at position 249 (K249) is an N6-acetyllysine. GTP is bound by residues K338, D340, H341, and V380. GDP is bound by residues K338, D340, H341, and V380.

The protein to H.influenzae HI_1637. Monomer in solution. It depends on Mg(2+) as a cofactor.

It catalyses the reaction GTP + H2O = GDP + phosphate + H(+). Its activity is regulated as follows. Alternates between an inactive form bound to GDP and an active form bound to GTP. Likely activated by a guanine nucleotide-exchange factor (GEF). Functionally, binds GTP and GDP. Has intrinsic GTPase activity. Does not hydrolyze ATP. May act as a transducer of stress responses. This chain is Ras-like GTPase YcjX (ycjX), found in Escherichia coli (strain K12).